A 470-amino-acid chain; its full sequence is 3-oxo-isoapionate kinase (470 aa).

Aspartate 30 and arginine 78 together coordinate substrate. Residues serine 291, 403–406, and glycine 451 contribute to the ATP site; that span reads GGDS.

Belongs to the four-carbon acid sugar kinase family.

The enzyme catalyses 3-oxoisoapionate + ATP = 3-oxoisoapionate 4-phosphate + ADP + H(+). It functions in the pathway carbohydrate metabolism. Involved in catabolism of D-apiose. Catalyzes the phosphorylation of 3-oxo-isoapionate to 3-oxo-isoapionate 4-phosphate. The sequence is that of 3-oxo-isoapionate kinase from Paraburkholderia graminis (strain ATCC 700544 / DSM 17151 / LMG 18924 / NCIMB 13744 / C4D1M).